The chain runs to 64 residues: Defensin beta 4A (64 aa).

A signal peptide spans 1-23; sequence MRVLYLLFSFLFIFLMPLPGVFG. 3 disulfides stabilise this stretch: Cys-31–Cys-60, Cys-38–Cys-53, and Cys-43–Cys-61. The tract at residues 33–48 is phosphatidylinositol 4,5-bisphosphate (PIP2) binding; that stretch reads KSGAICHPVFCPRRYK.

Belongs to the beta-defensin family. LAP/TAP subfamily. Monomer. Homodimer. As to expression, expressed in lung epithelial cells (at protein level). Expressed in foreskin, lung and trachea. Lower expression in kidney, uterus and salivary gland tissue. Expressed in epithelial cells of the respiratory tract, with higher expression in distal parenchyma of the lung, trachea, and tonsils, and lower expression in pharynx and adenoid, and low expression in tongue and larynx.

It localises to the secreted. Functionally, exhibits antimicrobial activity against Gram-negative bacteria and Gram-positive bacteria, with highest activity against Gram-negative bacteria. Antimicrobial activity against P.aruginosa seems to be salt-sensitive and is reduced with high salt concentrations greater than 25 mM. Also exhibits antimicrobial activity against the yeast C.albicans. Permeabilizes C.albicans cell membranes via targeting plasma membrane lipid phosphatidylinositol 4,5-bisphosphate (PIP2), thereby leading to cell fragmentation and cell death. Acts as a ligand for C-C chemokine receptor CCR6. Binds to CCR6 and induces chemotactic activity of CCR6-expressing cells, such as immature dendritic cells and memory T cells. The sequence is that of Defensin beta 4A (DEFB4A) from Homo sapiens (Human).